Consider the following 426-residue polypeptide: Serine hydroxymethyltransferase (426 aa).

(6S)-5,6,7,8-tetrahydrofolate-binding positions include Leu-113 and 117 to 119 (GHL). Lys-222 carries the post-translational modification N6-(pyridoxal phosphate)lysine. Residue 363–365 (SPF) participates in (6S)-5,6,7,8-tetrahydrofolate binding.

Belongs to the SHMT family. As to quaternary structure, homodimer. The cofactor is pyridoxal 5'-phosphate.

The protein localises to the cytoplasm. It carries out the reaction (6R)-5,10-methylene-5,6,7,8-tetrahydrofolate + glycine + H2O = (6S)-5,6,7,8-tetrahydrofolate + L-serine. Its pathway is one-carbon metabolism; tetrahydrofolate interconversion. The protein operates within amino-acid biosynthesis; glycine biosynthesis; glycine from L-serine: step 1/1. Its function is as follows. Catalyzes the reversible interconversion of serine and glycine with tetrahydrofolate (THF) serving as the one-carbon carrier. This reaction serves as the major source of one-carbon groups required for the biosynthesis of purines, thymidylate, methionine, and other important biomolecules. Also exhibits THF-independent aldolase activity toward beta-hydroxyamino acids, producing glycine and aldehydes, via a retro-aldol mechanism. The polypeptide is Serine hydroxymethyltransferase (Azobacteroides pseudotrichonymphae genomovar. CFP2).